Reading from the N-terminus, the 380-residue chain is Anhydro-N-acetylmuramic acid kinase (380 aa).

9 to 16 serves as a coordination point for ATP; sequence GTSVDGID.

It belongs to the anhydro-N-acetylmuramic acid kinase family.

It carries out the reaction 1,6-anhydro-N-acetyl-beta-muramate + ATP + H2O = N-acetyl-D-muramate 6-phosphate + ADP + H(+). Its pathway is amino-sugar metabolism; 1,6-anhydro-N-acetylmuramate degradation. It participates in cell wall biogenesis; peptidoglycan recycling. In terms of biological role, catalyzes the specific phosphorylation of 1,6-anhydro-N-acetylmuramic acid (anhMurNAc) with the simultaneous cleavage of the 1,6-anhydro ring, generating MurNAc-6-P. Is required for the utilization of anhMurNAc either imported from the medium or derived from its own cell wall murein, and thus plays a role in cell wall recycling. The polypeptide is Anhydro-N-acetylmuramic acid kinase (Cyanothece sp. (strain PCC 7425 / ATCC 29141)).